Here is a 409-residue protein sequence, read N- to C-terminus: NADH-ubiquinone oxidoreductase chain 4 (409 aa).

13 helical membrane-spanning segments follow: residues 9–29 (LYFF…GFVA), 44–64 (SFSF…VLLS), 68–88 (FMLL…FVPS), 90–110 (VILM…MILG), 125–145 (IFYA…SFFF), 160–180 (VFVL…HLWL), 194–214 (LLAG…LGCL), 221–241 (VWIV…MFQS), 246–268 (LAAY…IIMS), 273–295 (GVIL…GEFY), 305–325 (YMSS…VVFL), 352–372 (FSFW…IYLL), and 389–409 (VGFS…SVFF).

It belongs to the complex I subunit 4 family.

It is found in the mitochondrion membrane. The enzyme catalyses a ubiquinone + NADH + 5 H(+)(in) = a ubiquinol + NAD(+) + 4 H(+)(out). Its function is as follows. Core subunit of the mitochondrial membrane respiratory chain NADH dehydrogenase (Complex I) that is believed to belong to the minimal assembly required for catalysis. Complex I functions in the transfer of electrons from NADH to the respiratory chain. The immediate electron acceptor for the enzyme is believed to be ubiquinone. The protein is NADH-ubiquinone oxidoreductase chain 4 (ND4) of Ascaris suum (Pig roundworm).